Consider the following 294-residue polypeptide: Nucleophosmin (294 aa).

Residues L121 to D133 show a composition bias toward acidic residues. Residues L121–L244 are disordered. Positions P153–K158 match the Nuclear localization signal motif. Acidic residues predominate over residues E161 to E186. Residues P190–R196 carry the Nuclear localization signal motif. A compositionally biased stretch (basic and acidic residues) spans K223–L233.

It belongs to the nucleoplasmin family. Decamer formed by two pentameric rings associated in a head-to-head fashion. Phosphorylated.

It is found in the cytoplasm. Its subcellular location is the nucleus. The protein resides in the nucleoplasm. It localises to the nucleolus. Its function is as follows. Acts as a chaperonin for the core histones H3, H2B and H4. Associated with nucleolar ribonucleoprotein structures and bind single-stranded nucleic acids. It may function in the assembly and/or transport of ribosome. May stimulate endonuclease activity on apurinic/apyrimidinic (AP) double-stranded DNA. May inhibit endonuclease activity on AP single-stranded RNA. This chain is Nucleophosmin (NPM1), found in Gallus gallus (Chicken).